Reading from the N-terminus, the 367-residue chain is Anhydro-N-acetylmuramic acid kinase (367 aa).

13–20 lines the ATP pocket; that stretch reads GTSMDGAD.

The protein belongs to the anhydro-N-acetylmuramic acid kinase family.

It carries out the reaction 1,6-anhydro-N-acetyl-beta-muramate + ATP + H2O = N-acetyl-D-muramate 6-phosphate + ADP + H(+). The protein operates within amino-sugar metabolism; 1,6-anhydro-N-acetylmuramate degradation. It participates in cell wall biogenesis; peptidoglycan recycling. Catalyzes the specific phosphorylation of 1,6-anhydro-N-acetylmuramic acid (anhMurNAc) with the simultaneous cleavage of the 1,6-anhydro ring, generating MurNAc-6-P. Is required for the utilization of anhMurNAc either imported from the medium or derived from its own cell wall murein, and thus plays a role in cell wall recycling. The chain is Anhydro-N-acetylmuramic acid kinase from Neisseria meningitidis serogroup A / serotype 4A (strain DSM 15465 / Z2491).